The chain runs to 105 residues: Thioredoxin (105 aa).

The 105-residue stretch at methionine 1–isoleucine 105 folds into the Thioredoxin domain. Cysteines 29 and 32 form a disulfide.

The protein belongs to the thioredoxin family.

In terms of biological role, participates in various redox reactions through the reversible oxidation of its active center dithiol to a disulfide and catalyzes dithiol-disulfide exchange reactions. The polypeptide is Thioredoxin (trxA) (Acetoanaerobium sticklandii (strain ATCC 12662 / DSM 519 / JCM 1433 / CCUG 9281 / NCIMB 10654 / HF) (Clostridium sticklandii)).